Consider the following 368-residue polypeptide: Homoserine O-acetyltransferase (368 aa).

In terms of domain architecture, AB hydrolase-1 spans 43–346 (ILLEHALTGT…EYGHDAFLVE (304 aa)). Ser-145 acts as the Nucleophile in catalysis. Arg-212 is a binding site for substrate. Catalysis depends on residues Asp-307 and His-340. Position 341 (Asp-341) interacts with substrate.

It belongs to the AB hydrolase superfamily. MetX family. As to quaternary structure, homodimer.

The protein localises to the cytoplasm. It carries out the reaction L-homoserine + acetyl-CoA = O-acetyl-L-homoserine + CoA. It functions in the pathway amino-acid biosynthesis; L-methionine biosynthesis via de novo pathway; O-acetyl-L-homoserine from L-homoserine: step 1/1. Its function is as follows. Transfers an acetyl group from acetyl-CoA to L-homoserine, forming acetyl-L-homoserine. This Listeria innocua serovar 6a (strain ATCC BAA-680 / CLIP 11262) protein is Homoserine O-acetyltransferase.